The sequence spans 216 residues: Phosphatidylserine decarboxylase proenzyme (216 aa).

S182 serves as the catalytic Schiff-base intermediate with substrate; via pyruvic acid. Position 182 is a pyruvic acid (Ser); by autocatalysis (S182).

It belongs to the phosphatidylserine decarboxylase family. PSD-A subfamily. Heterodimer of a large membrane-associated beta subunit and a small pyruvoyl-containing alpha subunit. Pyruvate is required as a cofactor. Post-translationally, is synthesized initially as an inactive proenzyme. Formation of the active enzyme involves a self-maturation process in which the active site pyruvoyl group is generated from an internal serine residue via an autocatalytic post-translational modification. Two non-identical subunits are generated from the proenzyme in this reaction, and the pyruvate is formed at the N-terminus of the alpha chain, which is derived from the carboxyl end of the proenzyme. The post-translation cleavage follows an unusual pathway, termed non-hydrolytic serinolysis, in which the side chain hydroxyl group of the serine supplies its oxygen atom to form the C-terminus of the beta chain, while the remainder of the serine residue undergoes an oxidative deamination to produce ammonia and the pyruvoyl prosthetic group on the alpha chain.

It is found in the cell membrane. The enzyme catalyses a 1,2-diacyl-sn-glycero-3-phospho-L-serine + H(+) = a 1,2-diacyl-sn-glycero-3-phosphoethanolamine + CO2. It participates in phospholipid metabolism; phosphatidylethanolamine biosynthesis; phosphatidylethanolamine from CDP-diacylglycerol: step 2/2. Catalyzes the formation of phosphatidylethanolamine (PtdEtn) from phosphatidylserine (PtdSer). This Burkholderia mallei (strain NCTC 10247) protein is Phosphatidylserine decarboxylase proenzyme.